The following is a 268-amino-acid chain: Purine nucleoside phosphorylase (268 aa).

Phosphate-binding positions include S36, H68, 88 to 90 (RIH), and A120. E189 provides a ligand contact to a purine D-ribonucleoside. A phosphate-binding site is contributed by S208. N231 contacts a purine D-ribonucleoside.

It belongs to the PNP/MTAP phosphorylase family. As to quaternary structure, homotrimer.

It catalyses the reaction a purine 2'-deoxy-D-ribonucleoside + phosphate = a purine nucleobase + 2-deoxy-alpha-D-ribose 1-phosphate. Its pathway is purine metabolism; purine nucleoside salvage. Its function is as follows. The purine nucleoside phosphorylases catalyze the phosphorolytic breakdown of the N-glycosidic bond in the beta-(deoxy)ribonucleoside molecules, with the formation of the corresponding free purine bases and pentose-1-phosphate. Cleaves guanosine, inosine, 2'-deoxyguanosine and 2'-deoxyinosine. The chain is Purine nucleoside phosphorylase (punA) from Mycobacterium bovis (strain ATCC BAA-935 / AF2122/97).